A 264-amino-acid polypeptide reads, in one-letter code: Apolipoprotein A-I (264 aa).

The N-terminal stretch at 1–18 (MKAVVLAVAVLFLTGSQA) is a signal peptide. 2 repeat units span residues 67–88 (LNLL…EQLG) and 89–110 (SVTK…QQMN). A 10 X approximate tandem repeats region spans residues 67–264 (LNLLANWNTL…DQASKQLSAQ (198 aa)). Methionine sulfoxide is present on Met-109. The stretch at 111-121 (KDLEEVKQKVQ) is one 3; half-length repeat. 5 consecutive repeat copies span residues 122-142 (SYLD…RDKV), 144-165 (PLGK…EKLA), 166-187 (PLGQ…THLG), 188-208 (SYTQ…KESA), and 209-229 (PVSE…EKAK). Position 193 is a methionine sulfoxide (Met-193). The stretch at 230–240 (PALEDLRQGLM) is one 9; half-length repeat. At Met-240 the chain carries Methionine sulfoxide. Residues 241–264 (PVMESLKASFLSSIDQASKQLSAQ) form repeat 10.

This sequence belongs to the apolipoprotein A1/A4/E family. In terms of assembly, homodimer. Interacts with APOA1BP and CLU. Component of a sperm activating protein complex (SPAP), consisting of APOA1, an immunoglobulin heavy chain, an immunoglobulin light chain and albumin. Interacts with NDRG1. Interacts with SCGB3A2. Interacts with NAXE and YJEFN3. Post-translationally, glycosylated. In terms of processing, palmitoylated. Phosphorylation sites are present in the extracellular medium. In terms of tissue distribution, major protein of plasma HDL, also found in chylomicrons.

It is found in the secreted. Participates in the reverse transport of cholesterol from tissues to the liver for excretion by promoting cholesterol efflux from tissues and by acting as a cofactor for the lecithin cholesterol acyltransferase (LCAT). As part of the SPAP complex, activates spermatozoa motility. The protein is Apolipoprotein A-I (Apoa1) of Heterocephalus glaber (Naked mole rat).